A 341-amino-acid chain; its full sequence is Glycerol-3-phosphate dehydrogenase [NAD(P)+] (341 aa).

NADPH contacts are provided by S14, F15, R35, and K108. Residues K108 and G136 each contribute to the sn-glycerol 3-phosphate site. S140 is a binding site for NADPH. Sn-glycerol 3-phosphate-binding residues include K191, D244, S254, R255, and N256. K191 acts as the Proton acceptor in catalysis. R255 contacts NADPH. V279 and E281 together coordinate NADPH.

The protein belongs to the NAD-dependent glycerol-3-phosphate dehydrogenase family.

It is found in the cytoplasm. It catalyses the reaction sn-glycerol 3-phosphate + NAD(+) = dihydroxyacetone phosphate + NADH + H(+). It carries out the reaction sn-glycerol 3-phosphate + NADP(+) = dihydroxyacetone phosphate + NADPH + H(+). It participates in membrane lipid metabolism; glycerophospholipid metabolism. Catalyzes the reduction of the glycolytic intermediate dihydroxyacetone phosphate (DHAP) to sn-glycerol 3-phosphate (G3P), the key precursor for phospholipid synthesis. This chain is Glycerol-3-phosphate dehydrogenase [NAD(P)+], found in Pseudomonas putida (strain GB-1).